The chain runs to 255 residues: Type III pantothenate kinase (255 aa).

12 to 19 (DIGNSYTK) contributes to the ATP binding site. Substrate is bound at residue 109-112 (GDDL). The active-site Proton acceptor is the aspartate 111. ATP is bound at residue threonine 133. Threonine 185 contacts substrate.

The protein belongs to the type III pantothenate kinase family. Homodimer. NH4(+) is required as a cofactor. K(+) serves as cofactor.

The protein resides in the cytoplasm. It catalyses the reaction (R)-pantothenate + ATP = (R)-4'-phosphopantothenate + ADP + H(+). Its pathway is cofactor biosynthesis; coenzyme A biosynthesis; CoA from (R)-pantothenate: step 1/5. Its function is as follows. Catalyzes the phosphorylation of pantothenate (Pan), the first step in CoA biosynthesis. This is Type III pantothenate kinase from Malacoplasma penetrans (strain HF-2) (Mycoplasma penetrans).